The following is a 252-amino-acid chain: Protein PF0476 (252 aa).

This sequence belongs to the CinA family.

This is Protein PF0476 from Pyrococcus furiosus (strain ATCC 43587 / DSM 3638 / JCM 8422 / Vc1).